The chain runs to 485 residues: GlcNAc-binding protein A (485 aa).

The first 23 residues, 1–23 (MKKQPKMTAIALILSGISGLAYG), serve as a signal peptide directing secretion. Residues 24–201 (HGYVSAVENG…SFYNVIDVKF (178 aa)) form the Chitin-binding type-4 domain. The 42-residue stretch at 437-478 (AGTKVLASDGAIYQCKPWPYSGYCQQWTSNATQYQPGTGSHW) folds into the Chitin-binding type-3 domain.

The protein belongs to the GbpA family.

The protein localises to the secreted. In terms of biological role, probably interacts with GlcNAc residues. May promote attachment to both epithelial cell surfaces and chitin. The protein is GlcNAc-binding protein A of Vibrio cholerae serotype O1 (strain ATCC 39541 / Classical Ogawa 395 / O395).